The chain runs to 197 residues: Histone chaperone asf1b-B (197 aa).

It belongs to the ASF1 family. In terms of assembly, interacts with histone H3 and histone H4.

It is found in the nucleus. In terms of biological role, histone chaperone that facilitates histone deposition and histone exchange and removal during nucleosome assembly and disassembly. This Danio rerio (Zebrafish) protein is Histone chaperone asf1b-B (asf1bb).